The chain runs to 469 residues: 3-isopropylmalate dehydratase large subunit (469 aa).

C347, C407, and C410 together coordinate [4Fe-4S] cluster.

Belongs to the aconitase/IPM isomerase family. LeuC type 1 subfamily. In terms of assembly, heterodimer of LeuC and LeuD. It depends on [4Fe-4S] cluster as a cofactor.

The catalysed reaction is (2R,3S)-3-isopropylmalate = (2S)-2-isopropylmalate. Its pathway is amino-acid biosynthesis; L-leucine biosynthesis; L-leucine from 3-methyl-2-oxobutanoate: step 2/4. Catalyzes the isomerization between 2-isopropylmalate and 3-isopropylmalate, via the formation of 2-isopropylmaleate. The protein is 3-isopropylmalate dehydratase large subunit of Proteus mirabilis (strain HI4320).